The primary structure comprises 346 residues: Putative isoaspartyl peptidase/L-asparaginase (346 aa).

Residue Thr-207 is the Nucleophile of the active site. Residues 235-238 (RVGD) and 257-260 (TGTG) contribute to the substrate site.

It belongs to the Ntn-hydrolases family. Heterodimer of an alpha and beta chain produced by autocleavage. In terms of processing, cleaved into an alpha and beta chain by autocatalysis; this activates the enzyme. The N-terminal residue of the beta subunit is responsible for the nucleophile hydrolase activity.

It catalyses the reaction Cleavage of a beta-linked Asp residue from the N-terminus of a polypeptide.. The enzyme catalyses L-asparagine + H2O = L-aspartate + NH4(+). Functionally, has both L-asparaginase and beta-aspartyl peptidase activity. Does not have aspartylglucosaminidase activity and is inactive toward GlcNAc-L-Asn. Likewise, has no activity toward glutamine. The chain is Putative isoaspartyl peptidase/L-asparaginase from Dictyostelium discoideum (Social amoeba).